A 223-amino-acid chain; its full sequence is MIPMIVLATTNQNKVKEFQEILKDFAIEIRSLAEFGPIPEAIEDGKDFDENAYKKAIHTAKILGIPAIADDSGLEVHALNGAPGVYSARYSGEGATDASNCDKLLEELAGKEDRSANFTCVISIATPGGPALTYEGRCDGKILTEKRGKSGFGYDPLFYFAEYDKTFAELSMEEKNRVSHRGKALAEIKAEAPQIIKWLEQRLSEEKPAKPDHSEFEGNDWSK.

Thr-9 to Lys-14 is a substrate binding site. Asp-71 acts as the Proton acceptor in catalysis. Mg(2+) is bound at residue Asp-71. Substrate contacts are provided by residues Ser-72, Phe-152–Asp-155, Lys-175, and His-180–Arg-181. The interval Leu-203–Lys-223 is disordered.

It belongs to the HAM1 NTPase family. In terms of assembly, homodimer. Mg(2+) is required as a cofactor.

It carries out the reaction XTP + H2O = XMP + diphosphate + H(+). It catalyses the reaction dITP + H2O = dIMP + diphosphate + H(+). The catalysed reaction is ITP + H2O = IMP + diphosphate + H(+). Pyrophosphatase that catalyzes the hydrolysis of nucleoside triphosphates to their monophosphate derivatives, with a high preference for the non-canonical purine nucleotides XTP (xanthosine triphosphate), dITP (deoxyinosine triphosphate) and ITP. Seems to function as a house-cleaning enzyme that removes non-canonical purine nucleotides from the nucleotide pool, thus preventing their incorporation into DNA/RNA and avoiding chromosomal lesions. In Desulfotalea psychrophila (strain LSv54 / DSM 12343), this protein is dITP/XTP pyrophosphatase.